Here is a 291-residue protein sequence, read N- to C-terminus: Small ribosomal subunit protein uS3 (291 aa).

A KH type-2 domain is found at isoleucine 39 to lysine 110.

It belongs to the universal ribosomal protein uS3 family. Part of the 30S ribosomal subunit. Forms a tight complex with proteins S10 and S14.

Functionally, binds the lower part of the 30S subunit head. Binds mRNA in the 70S ribosome, positioning it for translation. The chain is Small ribosomal subunit protein uS3 from Borreliella afzelii (strain PKo) (Borrelia afzelii).